The sequence spans 358 residues: Peptide chain release factor 1 (358 aa).

An N5-methylglutamine modification is found at Gln-233.

The protein belongs to the prokaryotic/mitochondrial release factor family. Methylated by PrmC. Methylation increases the termination efficiency of RF1.

The protein localises to the cytoplasm. In terms of biological role, peptide chain release factor 1 directs the termination of translation in response to the peptide chain termination codons UAG and UAA. The chain is Peptide chain release factor 1 from Staphylococcus epidermidis (strain ATCC 35984 / DSM 28319 / BCRC 17069 / CCUG 31568 / BM 3577 / RP62A).